Consider the following 132-residue polypeptide: MKSYVAVFIGGAIGSLLRYAVNLLGGTAVFPWPTFIENTSGSLLLGLLTGFFAARAKKPLVQLCLGTGFCGGYTTMSAFSKETVLLLQSAAHIGVLYLMASLACGVCFAFLGIVIGKKVSGAAGKEKERYQS.

4 helical membrane-spanning segments follow: residues 5 to 25 (VAVF…NLLG), 34 to 54 (TFIE…FFAA), 59 to 79 (PLVQ…MSAF), and 95 to 115 (VLYL…GIVI). The Na(+) site is built by Gly71 and Thr74.

The protein belongs to the fluoride channel Fluc/FEX (TC 1.A.43) family.

The protein resides in the cell membrane. The catalysed reaction is fluoride(in) = fluoride(out). Na(+) is not transported, but it plays an essential structural role and its presence is essential for fluoride channel function. Fluoride-specific ion channel. Important for reducing fluoride concentration in the cell, thus reducing its toxicity. This is Fluoride-specific ion channel FluC 2 from Bacillus licheniformis (strain ATCC 14580 / DSM 13 / JCM 2505 / CCUG 7422 / NBRC 12200 / NCIMB 9375 / NCTC 10341 / NRRL NRS-1264 / Gibson 46).